The chain runs to 236 residues: DNA repair protein RecO (236 aa).

This sequence belongs to the RecO family.

In terms of biological role, involved in DNA repair and RecF pathway recombination. The protein is DNA repair protein RecO of Rickettsia typhi (strain ATCC VR-144 / Wilmington).